Reading from the N-terminus, the 378-residue chain is Succinyl-diaminopimelate desuccinylase (378 aa).

H68 lines the Zn(2+) pocket. Residue D70 is part of the active site. D101 provides a ligand contact to Zn(2+). E135 functions as the Proton acceptor in the catalytic mechanism. The Zn(2+) site is built by E136, E164, and H350.

It belongs to the peptidase M20A family. DapE subfamily. In terms of assembly, homodimer. Zn(2+) is required as a cofactor. Co(2+) serves as cofactor.

It carries out the reaction N-succinyl-(2S,6S)-2,6-diaminopimelate + H2O = (2S,6S)-2,6-diaminopimelate + succinate. The protein operates within amino-acid biosynthesis; L-lysine biosynthesis via DAP pathway; LL-2,6-diaminopimelate from (S)-tetrahydrodipicolinate (succinylase route): step 3/3. Catalyzes the hydrolysis of N-succinyl-L,L-diaminopimelic acid (SDAP), forming succinate and LL-2,6-diaminopimelate (DAP), an intermediate involved in the bacterial biosynthesis of lysine and meso-diaminopimelic acid, an essential component of bacterial cell walls. This Vibrio parahaemolyticus serotype O3:K6 (strain RIMD 2210633) protein is Succinyl-diaminopimelate desuccinylase.